A 139-amino-acid polypeptide reads, in one-letter code: Histone H3 (139 aa).

Positions methionine 1 to lysine 48 are disordered. Residue lysine 5 is modified to N6,N6,N6-trimethyllysine; alternate. The residue at position 5 (lysine 5) is an N6,N6-dimethyllysine; alternate. N6-methyllysine; alternate is present on residues lysine 5 and lysine 12. 6 positions are modified to N6-acetyllysine; alternate: lysine 12, lysine 17, lysine 21, lysine 26, lysine 30, and lysine 42. At lysine 17 the chain carries N6,N6-dimethyllysine; alternate. Lysine 21, lysine 26, lysine 30, and lysine 42 each carry N6-methyllysine; alternate. 2 positions are modified to N6,N6,N6-trimethyllysine; alternate: lysine 30 and lysine 42. N6,N6-dimethyllysine; alternate is present on residues lysine 30 and lysine 42. N6-acetyllysine is present on residues lysine 62 and lysine 70. The residue at position 85 (lysine 85) is an N6,N6,N6-trimethyllysine; alternate. Lysine 85 bears the N6,N6-dimethyllysine; alternate mark. Residue lysine 85 is modified to N6-methyllysine; alternate.

Belongs to the histone H3 family. As to quaternary structure, the nucleosome is a histone octamer containing two molecules each of H2A, H2B, H3 and H4 assembled in one H3-H4 heterotetramer and two H2A-H2B heterodimers. The octamer wraps approximately 147 bp of DNA. In terms of processing, mono-, di- and trimethylated by the COMPASS complex to form H3K4me1/2/3. H3K4me activates gene expression by regulating transcription elongation and plays a role in telomere length maintenance. H3K4me enrichment correlates with transcription levels, and occurs in a 5' to 3' gradient with H3K4me3 enrichment at the 5'-end of genes, shifting to H3K4me2 and then H3K4me1. Methylated by SET2 to form H3K36me. H3K36me represses gene expression. Methylated by DOT1 to form H3K79me. H3K79me is required for association of SIR proteins with telomeric regions and for telomeric silencing. The COMPASS-mediated formation of H3K4me2/3 and the DOT1-mediated formation of H3K79me require H2BK123ub1. Acetylation of histone H3 leads to transcriptional activation. Acetylated by GCN5 to form H3K14ac. H3K14ac can also be formed by ESA1. H3K56ac formation occurs predominantly in newly synthesized H3 molecules during G1, S and G2/M of the cell cycle and may be involved in DNA repair.

It is found in the nucleus. The protein localises to the chromosome. In terms of biological role, core component of nucleosome. Nucleosomes wrap and compact DNA into chromatin, limiting DNA accessibility to the cellular machineries which require DNA as a template. Histones thereby play a central role in transcription regulation, DNA repair, DNA replication and chromosomal stability. DNA accessibility is regulated via a complex set of post-translational modifications of histones, also called histone code, and nucleosome remodeling. This is Histone H3 (HHT1) from Yarrowia lipolytica (strain CLIB 122 / E 150) (Yeast).